The primary structure comprises 397 residues: Succinate--CoA ligase [ADP-forming] subunit beta (397 aa).

One can recognise an ATP-grasp domain in the interval 9 to 254 (KALLRSYGAP…ETEEDPKELA (246 aa)). Residues Lys-46, 53–55 (GRG), Glu-109, Ser-112, and Glu-117 each bind ATP. Mg(2+) contacts are provided by Asn-209 and Asp-223. Substrate is bound by residues Asn-274 and 331 to 333 (GIM).

Belongs to the succinate/malate CoA ligase beta subunit family. In terms of assembly, heterotetramer of two alpha and two beta subunits. Mg(2+) is required as a cofactor.

The enzyme catalyses succinate + ATP + CoA = succinyl-CoA + ADP + phosphate. It carries out the reaction GTP + succinate + CoA = succinyl-CoA + GDP + phosphate. Its pathway is carbohydrate metabolism; tricarboxylic acid cycle; succinate from succinyl-CoA (ligase route): step 1/1. Succinyl-CoA synthetase functions in the citric acid cycle (TCA), coupling the hydrolysis of succinyl-CoA to the synthesis of either ATP or GTP and thus represents the only step of substrate-level phosphorylation in the TCA. The beta subunit provides nucleotide specificity of the enzyme and binds the substrate succinate, while the binding sites for coenzyme A and phosphate are found in the alpha subunit. The chain is Succinate--CoA ligase [ADP-forming] subunit beta from Cereibacter sphaeroides (strain ATCC 17025 / ATH 2.4.3) (Rhodobacter sphaeroides).